Reading from the N-terminus, the 1042-residue chain is MADAFGDELFSVFEGDSTTAAGTKKDKEKDKGKWKGPPGSADKAGKRFDGKLQSESTNNGKNKRDVDFEGTDEPIFGKKPRIEESITEDLSLADLMPRVKVQSVETVEGCTHEVALPAEEDYLPLKPRVGKAAKEYPFILDAFQREAIQCVDNNQSVLVSAHTSAGKTVCAEYAIALALREKQRVIFTSPIKALSNQKYREMYEEFQDVGLMTGDVTINPTASCLVMTTEILRSMLYRGSEVMREVAWVIFDEIHYMRDSERGVVWEETIILLPDNVHYVFLSATIPNARQFAEWICHLHKQPCHVIYTDYRPTPLQHYIFPAGGDGLHLVVDENGDFREDNFNTAMQVLRDAGDLAKGDQKGRKGGTKGPSNVFKIVKMIMERNFQPVIIFSFSKKDCEAYALQMTKLDFNTDEEKKMVEEVFSNAIDCLSDEDKKLPQVEHVLPLLKRGIGIHHGGLLPILKETIEILFSEGLIKALFATETFAMGINMPARTVLFTNARKFDGKDFRWISSGEYIQMSGRAGRRGMDDRGIVILMVDEKMSPTIGKQLLKGSADPLNSAFHLTYNMVLNLLRVEEINPEYMLEKSFYQFQHYRAIPGVVEKVKNSEEQYNKIVIPNEESVVIYYKIRQQLAKLGKEIEEYIHKPKYCLPFLQPGRLVKVKNEGDDFGWGVVVNFSKKSNVKPNSGELDPLYVVEVLLRCSKESLKNSATEAAKPAKPDEKGEMQVVPVLVHLLSAISSVRLYIPKDLRPVDNRQSVLKSIQEVQKRFPDGIPLLDPIDDMGIQDQGLKKVIQKVEAFEHRMYSHPLHNDPNLETVYTLCEKKAQIAIDIKSAKRELKKARTVLQMDELKCRKRVLRRLGFATSSDVIEMKGRVACEISSADELLLTEMMFNGLFNDLSAEQATALLSCFVFQENSSEMPKLTEQLAGPLRQMQECAKRIAKVSAEAKLEIDEETYLSSFKPHLMDVVYTWATGATFAHICKMTDVFEGSIIRCMRRLEELLRQMCQAAKAIGNTELENKFAEGITKIKRDIVFAASLYL.

Ala2 carries the N-acetylalanine modification. Residues 16 to 74 (DSTTAAGTKKDKEKDKGKWKGPPGSADKAGKRFDGKLQSESTNNGKNKRDVDFEGTDEP) form a disordered region. Residues 23–33 (TKKDKEKDKGK) are compositionally biased toward basic and acidic residues. Lys24 participates in a covalent cross-link: Glycyl lysine isopeptide (Lys-Gly) (interchain with G-Cter in SUMO2). Ser40 carries the post-translational modification Phosphoserine. Over residues 43–52 (KAGKRFDGKL) the composition is skewed to basic and acidic residues. N6-acetyllysine is present on residues Lys51 and Lys78. ATP is bound by residues Ile139, 161 to 168 (AHTSAGKT), Ser164, Gly166, Lys167, and Thr168. The Helicase ATP-binding domain maps to 148-304 (IQCVDNNQSV…WICHLHKQPC (157 aa)). Residues 252–255 (DEIH) carry the DEIH box motif. Lys358 participates in a covalent cross-link: Glycyl lysine isopeptide (Lys-Gly) (interchain with G-Cter in SUMO2). The Helicase C-terminal domain maps to 405–577 (QMTKLDFNTD…NMVLNLLRVE (173 aa)). Residues Lys684 and Lys723 each participate in a glycyl lysine isopeptide (Lys-Gly) (interchain with G-Cter in SUMO2) cross-link.

It belongs to the helicase family. SKI2 subfamily. In terms of assembly, component of a TRAMP-like complex, an ATP-dependent exosome regulatory complex consisting of a helicase (MTREX), an oligadenylate polymerase (TENT4B or TENT4A), and a substrate specific RNA-binding factor (ZCCHC7 or ZCCHC8). Several TRAMP-like complexes exist with specific compositions and are associated with nuclear, or nucleolar RNA exosomes. Identified in the spliceosome C complex. Component of the poly(A) tail exosome targeting (PAXT) complex made of PABPN1, ZFC3H1 and MTREX that directs a subset of long and polyadenylated poly(A) RNAs for exosomal degradation. Component of the nuclear exosome targeting (NEXT) complex composed of MTREX, ZCCHC8, and RBM7 that directs a subset of non-coding short-lived RNAs for exosomal degradation. Interacts with ZCCHC8; this interaction bridges the interaction between RBM7 and MTREX. Binds to ZFC3H1 and RBM7 in a RNase-insensitive manner. Interacts with EXOSC10; the interaction mediates the association of MTREX with nuclear RNA exosomes. Interacts with isoform 1 of NVL in an ATP-dependent manner; the interaction is required to associate NVL with nuclear RNA exosome. Interacts with WDR74; the interaction dissociation in a late stage of rRNA synthesis is required for appropriate maturation of pre-60S particles and depends on the ATPase activity of NVL. Interacts with MPHOSPH6. Interacts with the RNA cap-binding complex proteins NCBP1 and SRRT. Interacts with NRDE2; the interaction is direct and negatively regulates MTREX function in exosomal degradation by changing its conformation precluding interaction with ZFC3H1, the RNA cap-binding complex proteins NCBP1 and SRRT, and association with the exosome. Associates with the RNA exosome complex.

Its subcellular location is the nucleus. It is found in the nucleoplasm. The protein localises to the nucleolus. The protein resides in the nucleus speckle. The enzyme catalyses ATP + H2O = ADP + phosphate + H(+). With respect to regulation, activated when MTREX is incorporated into NEXT complex an the nuclear RNA exosome complex. Its function is as follows. Catalyzes the ATP-dependent unwinding of RNA duplexes with a single-stranded 3' RNA extension. Central subunit of many protein complexes, namely TRAMP-like, nuclear exosome targeting (NEXT) and poly(A) tail exosome targeting (PAXT). NEXT functions as an RNA exosome cofactor that directs a subset of non-coding short-lived RNAs for exosomal degradation. NEXT is involved in surveillance and turnover of aberrant transcripts and non-coding RNAs. PAXT directs a subset of long and polyadenylated poly(A) RNAs for exosomal degradation. The RNA exosome is fundamental for the degradation of RNA in eukaryotic nuclei. Substrate targeting is facilitated by its cofactor ZCCHC8, which links to RNA-binding protein adapters. Associated with the RNA exosome complex and involved in the 3'-processing of the 7S pre-RNA to the mature 5.8S rRNA. May be involved in pre-mRNA splicing. In the context of NEXT complex can also in vitro unwind DNA:RNA heteroduplexes with a 3' poly (A) RNA tracking strand. Can promote unwinding and degradation of structured RNA substrates when associated with the nuclear exosome and its cofactors. Can displace a DNA strand while translocating on RNA to ultimately degrade the RNA within a DNA/RNA heteroduplex. Plays a role in DNA damage response. The polypeptide is Exosome RNA helicase MTR4 (Homo sapiens (Human)).